Consider the following 215-residue polypeptide: Protein LURP-one-related 4 (215 aa).

It belongs to the LOR family.

In terms of biological role, might be related to the phospholipid scramblase and tubby-like superfamily of membrane tethered transcription factors. The protein is Protein LURP-one-related 4 of Arabidopsis thaliana (Mouse-ear cress).